Reading from the N-terminus, the 461-residue chain is uncharacterized protein (461 aa).

Disordered regions lie at residues 254-273 (NNNNNNNNNNNNNNNNNNNN) and 368-414 (QPSQ…NNNS). The span at 381–413 (NNNNNNNNNNNNNNNNNNNNNNNNNNNNNNNNN) shows a compositional bias: low complexity.

This is an uncharacterized protein from Dictyostelium discoideum (Social amoeba).